The chain runs to 120 residues: Large ribosomal subunit protein uL29A (120 aa).

Phosphoserine is present on residues Ser13 and Ser50.

It belongs to the universal ribosomal protein uL29 family. In terms of assembly, component of the large ribosomal subunit (LSU). Mature yeast ribosomes consist of a small (40S) and a large (60S) subunit. The 40S small subunit contains 1 molecule of ribosomal RNA (18S rRNA) and 33 different proteins (encoded by 57 genes). The large 60S subunit contains 3 rRNA molecules (25S, 5.8S and 5S rRNA) and 46 different proteins (encoded by 81 genes). uL29 is associated with the polypeptide exit tunnel.

Its subcellular location is the cytoplasm. Its function is as follows. Component of the ribosome, a large ribonucleoprotein complex responsible for the synthesis of proteins in the cell. The small ribosomal subunit (SSU) binds messenger RNAs (mRNAs) and translates the encoded message by selecting cognate aminoacyl-transfer RNA (tRNA) molecules. The large subunit (LSU) contains the ribosomal catalytic site termed the peptidyl transferase center (PTC), which catalyzes the formation of peptide bonds, thereby polymerizing the amino acids delivered by tRNAs into a polypeptide chain. The nascent polypeptides leave the ribosome through a tunnel in the LSU and interact with protein factors that function in enzymatic processing, targeting, and the membrane insertion of nascent chains at the exit of the ribosomal tunnel. This chain is Large ribosomal subunit protein uL29A, found in Saccharomyces cerevisiae (strain ATCC 204508 / S288c) (Baker's yeast).